Here is an 88-residue protein sequence, read N- to C-terminus: Apolipoprotein C-I (88 aa).

The signal sequence occupies residues Met-1 to Ala-26.

Belongs to the apolipoprotein C1 family.

The protein localises to the secreted. Its function is as follows. Inhibitor of lipoprotein binding to the low density lipoprotein (LDL) receptor, LDL receptor-related protein, and very low density lipoprotein (VLDL) receptor. Associates with high density lipoproteins (HDL) and the triacylglycerol-rich lipoproteins in the plasma and makes up about 10% of the protein of the VLDL and 2% of that of HDL. Appears to interfere directly with fatty acid uptake and is also the major plasma inhibitor of cholesteryl ester transfer protein (CETP). Binds free fatty acids and reduces their intracellular esterification. Modulates the interaction of APOE with beta-migrating VLDL and inhibits binding of beta-VLDL to the LDL receptor-related protein. The chain is Apolipoprotein C-I (APOC1) from Tupaia glis (Common tree shrew).